The primary structure comprises 77 residues: RNA-binding protein Hfq (77 aa).

The Sm domain occupies 10 to 70 (DAFLNHVRKT…ISTVMPAQPI (61 aa)).

Belongs to the Hfq family. Homohexamer.

RNA chaperone that binds small regulatory RNA (sRNAs) and mRNAs to facilitate mRNA translational regulation in response to envelope stress, environmental stress and changes in metabolite concentrations. Also binds with high specificity to tRNAs. This Jannaschia sp. (strain CCS1) protein is RNA-binding protein Hfq.